We begin with the raw amino-acid sequence, 906 residues long: Protein translocase subunit SecA (906 aa).

ATP is bound by residues Q89, 107 to 111 (GEGKT), and D502. Residues 868–887 (VPPAQRDPADPRTWGKVSRN) form a disordered region. Zn(2+)-binding residues include C890, C892, C901, and H902.

The protein belongs to the SecA family. In terms of assembly, monomer and homodimer. Part of the essential Sec protein translocation apparatus which comprises SecA, SecYEG and auxiliary proteins SecDF-YajC and YidC. It depends on Zn(2+) as a cofactor.

The protein resides in the cell inner membrane. It localises to the cytoplasm. It catalyses the reaction ATP + H2O + cellular proteinSide 1 = ADP + phosphate + cellular proteinSide 2.. Its function is as follows. Part of the Sec protein translocase complex. Interacts with the SecYEG preprotein conducting channel. Has a central role in coupling the hydrolysis of ATP to the transfer of proteins into and across the cell membrane, serving both as a receptor for the preprotein-SecB complex and as an ATP-driven molecular motor driving the stepwise translocation of polypeptide chains across the membrane. This Brucella abortus (strain S19) protein is Protein translocase subunit SecA.